A 532-amino-acid polypeptide reads, in one-letter code: Light-independent protochlorophyllide reductase subunit B (532 aa).

Asp36 contributes to the [4Fe-4S] cluster binding site. The active-site Proton donor is Asp282. Substrate is bound at residue 417 to 418; the sequence is GL.

Belongs to the ChlB/BchB/BchZ family. Protochlorophyllide reductase is composed of three subunits; BchL, BchN and BchB. Forms a heterotetramer of two BchB and two BchN subunits. [4Fe-4S] cluster is required as a cofactor.

The enzyme catalyses chlorophyllide a + oxidized 2[4Fe-4S]-[ferredoxin] + 2 ADP + 2 phosphate = protochlorophyllide a + reduced 2[4Fe-4S]-[ferredoxin] + 2 ATP + 2 H2O. The protein operates within porphyrin-containing compound metabolism; bacteriochlorophyll biosynthesis (light-independent). Its function is as follows. Component of the dark-operative protochlorophyllide reductase (DPOR) that uses Mg-ATP and reduced ferredoxin to reduce ring D of protochlorophyllide (Pchlide) to form chlorophyllide a (Chlide). This reaction is light-independent. The NB-protein (BchN-BchB) is the catalytic component of the complex. This chain is Light-independent protochlorophyllide reductase subunit B, found in Methylobacterium radiotolerans (strain ATCC 27329 / DSM 1819 / JCM 2831 / NBRC 15690 / NCIMB 10815 / 0-1).